Reading from the N-terminus, the 89-residue chain is Small ribosomal subunit protein uS17 (89 aa).

The protein belongs to the universal ribosomal protein uS17 family. As to quaternary structure, part of the 30S ribosomal subunit.

Functionally, one of the primary rRNA binding proteins, it binds specifically to the 5'-end of 16S ribosomal RNA. The chain is Small ribosomal subunit protein uS17 from Xylella fastidiosa (strain 9a5c).